Here is a 500-residue protein sequence, read N- to C-terminus: Maturase K (500 aa).

This sequence belongs to the intron maturase 2 family. MatK subfamily.

It localises to the plastid. Its subcellular location is the chloroplast. Functionally, usually encoded in the trnK tRNA gene intron. Probably assists in splicing its own and other chloroplast group II introns. This Helianthus annuus (Common sunflower) protein is Maturase K.